The primary structure comprises 306 residues: MTHSSVNASSDPDLSHIGPRDKAEILAQALPYIRKFHGKTLVIKYGGNAMTDPALQADFAEDVVLLKLVGMNPVVVHGGGPQIETALNRLGKKGHFIQGMRVTDDETMEVVEWVLAGQVQQDIVGLINQAGGKAVGLTGRDGGMIRAKKLTMLDKDDASKEHDIGFVGEIVSIDPSVVKALQDDAFIPVISPIGFGENNESYNINADVVAGKLATVLKAEKLVLLTNIPGVLNKAGELLTDLTAREIDELFADGTISGGMLPKIEGALDAAKSGVNAVHIIDGRVPHAMLLEILTDKAYGTMIRSH.

Substrate contacts are provided by residues 79–80 (GG), Arg101, and Asn203.

Belongs to the acetylglutamate kinase family. ArgB subfamily.

Its subcellular location is the cytoplasm. The enzyme catalyses N-acetyl-L-glutamate + ATP = N-acetyl-L-glutamyl 5-phosphate + ADP. The protein operates within amino-acid biosynthesis; L-arginine biosynthesis; N(2)-acetyl-L-ornithine from L-glutamate: step 2/4. Catalyzes the ATP-dependent phosphorylation of N-acetyl-L-glutamate. This Polaromonas naphthalenivorans (strain CJ2) protein is Acetylglutamate kinase.